A 1065-amino-acid chain; its full sequence is Alpha-L-arabinofuranosidase (1065 aa).

The signal sequence occupies residues methionine 1 to alanine 26. Residues valine 277–glutamate 346 enclose the BIG2 domain. The disordered stretch occupies residues lysine 997–serine 1031. Residues lysine 1014–serine 1031 show a composition bias toward polar residues. A helical membrane pass occupies residues valine 1040–tryptophan 1060.

It belongs to the glycosyl hydrolase 43 family.

The protein localises to the cell membrane. The catalysed reaction is Hydrolysis of terminal non-reducing alpha-L-arabinofuranoside residues in alpha-L-arabinosides.. Its function is as follows. Involved in the type II arabinogalactan (AG) side chains degradation. Releases arabinofuranose (Araf) from alpha-1,3-Araf-substituted beta-1,6-galactooligosaccharides. Can use radish root AGP, larch AG and arabinan. Shows weaker activity with gum arabic and arabinoxylan. The protein is Alpha-L-arabinofuranosidase of Bifidobacterium longum subsp. longum (strain ATCC 15707 / DSM 20219 / JCM 1217 / NCTC 11818 / E194b).